Consider the following 103-residue polypeptide: Probable protease inhibitor Egf0.4a (103 aa).

The signal sequence occupies residues 1-22 (MMSEKFALVLLVACIAFIGIET). In terms of domain architecture, TIL spans 35–87 (CGENEAYDSMRRGCEKRCDDHNPTFCFKFTTVCWCEKGYVRDKSDTCIKVEDC).

Belongs to the polydnaviridae EGF-like motif protein family.

In Microplitis demolitor (Parasitoid wasp), this protein is Probable protease inhibitor Egf0.4a (O4).